Here is a 171-residue protein sequence, read N- to C-terminus: Spiderine-2a (171 aa).

The N-terminal stretch at 1-18 (MKFALVLLGVCAFYLVNA) is a signal peptide. Residues 19–58 (TGDLETELEASELQELQEALDLIAETPLESLEAEELEEAR) constitute a propeptide, removed in mature form. The tract at residues 59-104 (KFKLPKINWGKLASKAKDVYKKGQKLAKNKNVKKALKYGKQLAENL) is linear cationic cytotoxin domain. In terms of domain architecture, Oxytoxin-type inhibitor cystine knot (ICK) spans 118–171 (NNKCWAIGTRCTDDCDCCPEHHCHCPAKSWTFGLIPCSCQVTESDKVNKCPPAE). 5 disulfides stabilise this stretch: Cys121/Cys135, Cys128/Cys140, Cys132/Cys167, Cys134/Cys156, and Cys142/Cys154.

Disulfide bonds. In terms of tissue distribution, expressed by the venom gland.

The protein localises to the secreted. Functionally, has antimicrobial, insecticidal, cytolytic and cytotoxic activity. The chain is Spiderine-2a from Oxyopes takobius (Lynx spider).